A 259-amino-acid polypeptide reads, in one-letter code: Leucine-rich repeat-containing protein 61 (259 aa).

LRR repeat units follow at residues 32-53 (SILL…GECL), 54-75 (GLEW…ASLR), 76-97 (QLAV…ATCE), and 98-119 (NLQS…QCLA). The LRRCT domain occupies 138–178 (NPLCANPSYWAAVRELLPGLKVIDGERVIGRGSEFYQLCRD).

The sequence is that of Leucine-rich repeat-containing protein 61 (LRRC61) from Homo sapiens (Human).